The chain runs to 60 residues: Temporin-CG2 (60 aa).

The signal sequence occupies residues 1-22 (MFTLKKPLLVLFFLATINLSLC). Residues 23–43 (EQERNAEEERRDDDERNVEVE) constitute a propeptide, removed in mature form.

As to expression, expressed by the skin glands.

The protein localises to the secreted. In terms of biological role, antimicrobial peptide active against a variety of Gram-positive bacterial strains but not against Gram-negative bacteria. Has weak antifungal activity against a slime mold isolate. Has weak hemolytic activity against human erythrocytes. The sequence is that of Temporin-CG2 from Amolops chunganensis (Chungan torrent frog).